Here is a 573-residue protein sequence, read N- to C-terminus: Proton-coupled zinc antiporter SLC30A9, mitochondrial (573 aa).

The disordered stretch occupies residues 66-108 (NCSTSGSGKDGSPTRPEEPKTTEKAQAAQPAAKGAGSKPQGLT). Positions 90–104 (AQAAQPAAKGAGSKP) are enriched in low complexity. 5 consecutive transmembrane segments (helical) span residues 244-264 (VVMVAICINGLNFFFKLLAWV), 319-339 (GVGIFMMGAGLSWYHGIMGLL), 347-367 (LLWAYCILAGSLVSEGATLLV), 397-417 (VVLLEDAAAVLGVVLAAGCMG), and 429-449 (SLGSLGVGTLLGTVSAFLIYT). An LXXLL motif motif is present at residues 467 to 471 (LTEFL).

The protein belongs to the cation diffusion facilitator (CDF) transporter (TC 2.A.4) family. SLC30A subfamily.

The protein localises to the mitochondrion membrane. It localises to the nucleus. The protein resides in the endoplasmic reticulum. It catalyses the reaction Zn(2+)(in) + 2 H(+)(out) = Zn(2+)(out) + 2 H(+)(in). Its function is as follows. Mitochondrial proton-coupled zinc ion antiporter mediating the export of zinc from the mitochondria and involved in zinc homeostasis, zinc mobilization as well as mitochondrial morphology and health. In nucleus, may function as a secondary coactivator for nuclear receptors. This chain is Proton-coupled zinc antiporter SLC30A9, mitochondrial (slc30a9), found in Danio rerio (Zebrafish).